Reading from the N-terminus, the 217-residue chain is Chaperone protein TorD (217 aa).

The protein belongs to the TorD/DmsD family. TorD subfamily.

It is found in the cytoplasm. Involved in the biogenesis of TorA. Acts on TorA before the insertion of the molybdenum cofactor and, as a result, probably favors a conformation of the apoenzyme that is competent for acquiring the cofactor. This Shewanella oneidensis (strain ATCC 700550 / JCM 31522 / CIP 106686 / LMG 19005 / NCIMB 14063 / MR-1) protein is Chaperone protein TorD.